The chain runs to 28 residues: Conotoxin Cal6.43b (28 aa).

Disulfide bonds link C3–C13, C7–C19, and C12–C25.

As to expression, expressed by the venom duct.

Its subcellular location is the secreted. Its function is as follows. Probable neurotoxin with unknown target. Possibly targets ion channels. The polypeptide is Conotoxin Cal6.43b (Californiconus californicus (California cone)).